The chain runs to 241 residues: Sugar fermentation stimulation protein homolog (241 aa).

This sequence belongs to the SfsA family.

The sequence is that of Sugar fermentation stimulation protein homolog from Yersinia enterocolitica serotype O:8 / biotype 1B (strain NCTC 13174 / 8081).